We begin with the raw amino-acid sequence, 516 residues long: Keratin, type II cuticular Hb2 (516 aa).

The head stretch occupies residues 1–118 (MSCRNFQLSP…PTVQRVKRDE (118 aa)). Positions 118-429 (EKEQIKCLNN…RLLEGEEHRL (312 aa)) constitute an IF rod domain. Residues 119–153 (KEQIKCLNNRFASFINKVRFLEQKNKLLETKWNFM) are coil 1A. The interval 154–163 (QQQRSCQSNM) is linker 1. The tract at residues 164 to 264 (EPLFEGYICA…FEEEIGLLQS (101 aa)) is coil 1B. Positions 265-281 (QISETSVIVKMDNSREL) are linker 12. The tract at residues 282-425 (DVDGIVAEIK…ATYRRLLEGE (144 aa)) is coil 2. The tract at residues 426 to 516 (EHRLCEGIGP…VGVGSNSCSR (91 aa)) is tail.

It belongs to the intermediate filament family. Heterotetramer of two type I and two type II keratins.

This is Keratin, type II cuticular Hb2 (Krt82) from Mus musculus (Mouse).